Here is a 561-residue protein sequence, read N- to C-terminus: Potassium-transporting ATPase potassium-binding subunit (561 aa).

12 helical membrane passes run 5–25, 60–80, 86–106, 130–150, 177–197, 247–267, 281–301, 324–344, 376–396, 415–435, 491–511, and 533–553; these read LAAG…YVPV, YGYA…LYFL, VLPL…NTAI, VGLA…AIAL, ILLP…VIQS, PTPL…VCLT, LTLL…TLAA, FGIP…TGAV, GLYG…LLVG, ALSI…TVIL, ICML…AGAL, and GLLT…ALAL.

This sequence belongs to the KdpA family. As to quaternary structure, the system is composed of three essential subunits: KdpA, KdpB and KdpC.

It is found in the cell membrane. Functionally, part of the high-affinity ATP-driven potassium transport (or Kdp) system, which catalyzes the hydrolysis of ATP coupled with the electrogenic transport of potassium into the cytoplasm. This subunit binds the extracellular potassium ions and delivers the ions to the membrane domain of KdpB through an intramembrane tunnel. This Rhodococcus erythropolis (strain PR4 / NBRC 100887) protein is Potassium-transporting ATPase potassium-binding subunit.